The chain runs to 333 residues: Complement C1q and tumor necrosis factor-related protein 9 (333 aa).

Positions 1–19 (MRIWWLLLVMGACTRSVFS) are cleaved as a signal peptide. Residues 22–194 (TCRQGHSGIP…GDRGEKGKVG (173 aa)) are disordered. Collagen-like domains lie at 24–82 (RQGH…DGRV), 84–130 (AKGI…KGEV), and 134–193 (GPEG…KGKV). Pro-31, Pro-34, and Pro-40 each carry 4-hydroxyproline. Positions 42-57 (RDGRDGAKGDKGDAGE) are enriched in basic and acidic residues. 4-hydroxyproline is present on residues Pro-58, Pro-61, and Pro-64. Over residues 67 to 88 (DGIRGEKGEPGADGRVEAKGIK) the composition is skewed to basic and acidic residues. The residue at position 73 (Lys-73) is a 5-hydroxylysine. Lys-73 is a glycosylation site (O-linked (Gal...) hydroxylysine). A 4-hydroxyproline mark is found at Pro-76 and Pro-115. Lys-127 carries the post-translational modification 5-hydroxylysine. Lys-127 carries O-linked (Gal...) hydroxylysine glycosylation. A 4-hydroxyproline mark is found at Pro-151, Pro-160, and Pro-175. Positions 183–193 (WKGDRGEKGKV) are enriched in basic and acidic residues. Positions 197–333 (PLVPKSAFTV…FTGFLLFSSS (137 aa)) constitute a C1q domain.

As to quaternary structure, multimers (predominantly trimers). Interacts with ADIPOQ via the C1q domain to form a heterotrimeric complex. In terms of processing, the isomeric forms of the hydroxylated amino acids could not be determined in the mass-spectrometric methods reported in PubMed:18787108 but are assumed on the basis of their occurrence in collagen-like domains. Expressed predominantly in adipose tissue. Females express higher levels than males.

It is found in the secreted. Functionally, probable adipokine. Activates AMPK, AKT, and p44/42 MAPK signaling pathways. The chain is Complement C1q and tumor necrosis factor-related protein 9 (C1qtnf9) from Mus musculus (Mouse).